We begin with the raw amino-acid sequence, 420 residues long: Serine hydroxymethyltransferase (420 aa).

Residues L121 and 125 to 127 (GHL) each bind (6S)-5,6,7,8-tetrahydrofolate. K229 carries the post-translational modification N6-(pyridoxal phosphate)lysine.

It belongs to the SHMT family. Homodimer. The cofactor is pyridoxal 5'-phosphate.

It localises to the cytoplasm. The enzyme catalyses (6R)-5,10-methylene-5,6,7,8-tetrahydrofolate + glycine + H2O = (6S)-5,6,7,8-tetrahydrofolate + L-serine. It participates in one-carbon metabolism; tetrahydrofolate interconversion. The protein operates within amino-acid biosynthesis; glycine biosynthesis; glycine from L-serine: step 1/1. In terms of biological role, catalyzes the reversible interconversion of serine and glycine with tetrahydrofolate (THF) serving as the one-carbon carrier. This reaction serves as the major source of one-carbon groups required for the biosynthesis of purines, thymidylate, methionine, and other important biomolecules. Also exhibits THF-independent aldolase activity toward beta-hydroxyamino acids, producing glycine and aldehydes, via a retro-aldol mechanism. This is Serine hydroxymethyltransferase from Aggregatibacter actinomycetemcomitans (Actinobacillus actinomycetemcomitans).